Reading from the N-terminus, the 361-residue chain is D-alanine--D-alanine ligase (361 aa).

Positions 134–344 constitute an ATP-grasp domain; the sequence is KLLLKSFDIP…FKDLVDNLID (211 aa). Residue 167–222 participates in ATP binding; sequence KEVLGYPVIVKPAVLGSSIGINVAYSENQIESFIKEALKYDLTIVIEKFIEAREIE. Residues Asp-297, Glu-311, and Asn-313 each contribute to the Mg(2+) site.

Belongs to the D-alanine--D-alanine ligase family. Requires Mg(2+) as cofactor. Mn(2+) serves as cofactor.

It is found in the cytoplasm. The enzyme catalyses 2 D-alanine + ATP = D-alanyl-D-alanine + ADP + phosphate + H(+). Its pathway is cell wall biogenesis; peptidoglycan biosynthesis. Cell wall formation. The polypeptide is D-alanine--D-alanine ligase (Borreliella burgdorferi (strain ZS7) (Borrelia burgdorferi)).